Reading from the N-terminus, the 1154-residue chain is Large proline-rich protein BAG6 (1154 aa).

The residue at position 1 (M1) is an N-acetylmethionine. The region spanning 17–92 (LEVLVKTLDS…HLVERAPPQT (76 aa)) is the Ubiquitin-like domain. Disordered regions lie at residues 87–125 (RAPPQTQLPSGASSGTGSASATHGGAPLPGTRGPGASVH), 186–274 (RGGT…HPSP), 387–442 (TMTG…SSHP), 463–531 (QDSG…QGAG), and 568–626 (AQAQ…SAAD). Position 96 is a phosphoserine (S96). The segment covering 96–112 (SGASSGTGSASATHGGA) has biased composition (low complexity). A Phosphothreonine modification is found at T117. Residues 209–218 (VALNSQTSEP) are compositionally biased toward polar residues. Repeat 1 spans residues 237–271 (RPPTQTPELAPSGPAPAGPAPAGPAPAPETNAPNH). The interval 237–658 (RPPTQTPELA…MASPTITVAM (422 aa)) is 4 X 29 AA approximate repeats. The segment covering 249 to 263 (GPAPAGPAPAGPAPA) has biased composition (pro residues). The span at 400-409 (GAEAATPGSA) shows a compositional bias: low complexity. The span at 410–426 (QATSLPPSSTTVDSSTE) shows a compositional bias: polar residues. Repeat unit 2 spans residues 416-444 (PSSTTVDSSTEGAPPPGPAPPPASSHPRV). Pro residues-rich tracts occupy residues 428–439 (APPPGPAPPPAS) and 508–521 (PTPPQARPSHPGGP). Low complexity-rich tracts occupy residues 568-581 (AQAQAQAQAQAQAP) and 591-609 (PATASASAGTTNTATTAGP). Tandem repeats lie at residues 597-624 (SAGTTNTATTAGPAPGGPAQPPPPQPSA) and 630-658 (SQLLGNLLGPAGPGAGGPGMASPTITVAM). The segment covering 611–622 (PGGPAQPPPPQP) has biased composition (pro residues). Disordered regions lie at residues 673–719 (QASQ…ESLP) and 968–1154 (PPQT…ADDP). Residues 678–702 (APPPPPPPPPPPPAPEQQSTPPPGS) are compositionally biased toward pro residues. Phosphoserine is present on residues S986 and S995. Over residues 1029–1042 (AEPWAAAVPPEWVP) the composition is skewed to low complexity. Positions 1032–1062 (WAAAVPPEWVPIIQQDIQSQRKVKPQPPLSD) are required for interaction with GET4. The short motif at 1034-1076 (AAVPPEWVPIIQQDIQSQRKVKPQPPLSDAYLSGMPAKRRKTM) is the Nuclear localization site element. The interval 1044-1154 (IQQDIQSQRK…NAHRAFADDP (111 aa)) is sufficient for the delivery of client proteins to the endoplasmic reticulum. The residue at position 1075 (T1075) is a Phosphothreonine. The segment at 1080–1137 (GPQLLLSEAVSRAAKAAGARPLTSPESLSRDLEAPEVQESYRQQLRSDIQKRLQEDPN) is BAG-similar domain, required and sufficient for interaction with UBL4A. Over residues 1088-1098 (AVSRAAKAAGA) the composition is skewed to low complexity. Phosphoserine occurs at positions 1103 and 1139.

As to quaternary structure, component of the BAG6/BAT3 complex, also named BAT3 complex, at least composed of BAG6, UBL4A and GET4/TRC35. Interacts with GET4; the interaction is direct and localizes BAG6 in the cytosol. Interacts with UBL4A; the interaction is direct and required for UBL4A protein stability. Interacts with AIFM1. Interacts with HSPA2. Interacts with CTCFL. Interacts with p300/EP300. Interacts (via ubiquitin-like domain) with RNF126; required for BAG6-dependent ubiquitination of proteins mislocalized to the cytosol. Interacts (via ubiquitin-like domain) with SGTA; SGTA competes with RNF126 by binding the same region of BAG6, thereby promoting deubiquitination of BAG6-target proteins and rescuing them from degradation. Interacts with ricin A chain. Interacts with VCP and AMFR; both form the VCP/p97-AMFR/gp78 complex. Interacts with SYVN1. Interacts with USP13; the interaction is direct and may mediate UBL4A deubiquitination. Interacts with ZFAND2B. Interacts with KPNA2. Interacts with UBQLN4. In terms of processing, ricin can induce a cleavage by the caspase CASP3. The released C-terminal peptide induces apoptosis.

Its subcellular location is the cytoplasm. The protein localises to the cytosol. It is found in the nucleus. The protein resides in the secreted. It localises to the extracellular exosome. Its function is as follows. ATP-independent molecular chaperone preventing the aggregation of misfolded and hydrophobic patches-containing proteins. Functions as part of a cytosolic protein quality control complex, the BAG6/BAT3 complex, which maintains these client proteins in a soluble state and participates in their proper delivery to the endoplasmic reticulum or alternatively can promote their sorting to the proteasome where they undergo degradation. The BAG6/BAT3 complex is involved in the post-translational delivery of tail-anchored/type II transmembrane proteins to the endoplasmic reticulum membrane. Recruited to ribosomes, it interacts with the transmembrane region of newly synthesized tail-anchored proteins and together with SGTA and ASNA1 mediates their delivery to the endoplasmic reticulum. Client proteins that cannot be properly delivered to the endoplasmic reticulum are ubiquitinated by RNF126, an E3 ubiquitin-protein ligase associated with BAG6 and are sorted to the proteasome. SGTA which prevents the recruitment of RNF126 to BAG6 may negatively regulate the ubiquitination and the proteasomal degradation of client proteins. Similarly, the BAG6/BAT3 complex also functions as a sorting platform for proteins of the secretory pathway that are mislocalized to the cytosol either delivering them to the proteasome for degradation or to the endoplasmic reticulum. The BAG6/BAT3 complex also plays a role in the endoplasmic reticulum-associated degradation (ERAD), a quality control mechanism that eliminates unwanted proteins of the endoplasmic reticulum through their retrotranslocation to the cytosol and their targeting to the proteasome. It maintains these retrotranslocated proteins in an unfolded yet soluble state condition in the cytosol to ensure their proper delivery to the proteasome. BAG6 is also required for selective ubiquitin-mediated degradation of defective nascent chain polypeptides by the proteasome. In this context, it may participate in the production of antigenic peptides and play a role in antigen presentation in immune response. BAG6 is also involved in endoplasmic reticulum stress-induced pre-emptive quality control, a mechanism that selectively attenuates the translocation of newly synthesized proteins into the endoplasmic reticulum and reroutes them to the cytosol for proteasomal degradation. BAG6 may ensure the proper degradation of these proteins and thereby protects the endoplasmic reticulum from protein overload upon stress. By inhibiting the polyubiquitination and subsequent proteasomal degradation of HSPA2 it may also play a role in the assembly of the synaptonemal complex during spermatogenesis. Also positively regulates apoptosis by interacting with and stabilizing the proapoptotic factor AIFM1. By controlling the steady-state expression of the IGF1R receptor, indirectly regulates the insulin-like growth factor receptor signaling pathway. In terms of biological role, involved in DNA damage-induced apoptosis: following DNA damage, accumulates in the nucleus and forms a complex with p300/EP300, enhancing p300/EP300-mediated p53/TP53 acetylation leading to increase p53/TP53 transcriptional activity. When nuclear, may also act as a component of some chromatin regulator complex that regulates histone 3 'Lys-4' dimethylation (H3K4me2). Released extracellularly via exosomes, it is a ligand of the natural killer/NK cells receptor NCR3 and stimulates NK cells cytotoxicity. It may thereby trigger NK cells cytotoxicity against neighboring tumor cells and immature myeloid dendritic cells (DC). Functionally, may mediate ricin-induced apoptosis. The protein is Large proline-rich protein BAG6 of Mus musculus (Mouse).